The primary structure comprises 331 residues: Ketol-acid reductoisomerase (NADP(+)) (331 aa).

Residues 2–182 enclose the KARI N-terminal Rossmann domain; it reads AKLFYDSDAD…GGTRAGILET (181 aa). NADP(+) contacts are provided by residues 25–28, S51, S53, and 83–86; these read YGSQ and DEFQ. The active site involves H108. Position 134 (G134) interacts with NADP(+). One can recognise a KARI C-terminal knotted domain in the interval 183-328; sequence NFKEETETDL…KTLRSMFSWL (146 aa). Residues D191, E195, E227, and E231 each coordinate Mg(2+). S252 contributes to the substrate binding site.

This sequence belongs to the ketol-acid reductoisomerase family. Mg(2+) serves as cofactor.

It carries out the reaction (2R)-2,3-dihydroxy-3-methylbutanoate + NADP(+) = (2S)-2-acetolactate + NADPH + H(+). The catalysed reaction is (2R,3R)-2,3-dihydroxy-3-methylpentanoate + NADP(+) = (S)-2-ethyl-2-hydroxy-3-oxobutanoate + NADPH + H(+). The protein operates within amino-acid biosynthesis; L-isoleucine biosynthesis; L-isoleucine from 2-oxobutanoate: step 2/4. Its pathway is amino-acid biosynthesis; L-valine biosynthesis; L-valine from pyruvate: step 2/4. In terms of biological role, involved in the biosynthesis of branched-chain amino acids (BCAA). Catalyzes an alkyl-migration followed by a ketol-acid reduction of (S)-2-acetolactate (S2AL) to yield (R)-2,3-dihydroxy-isovalerate. In the isomerase reaction, S2AL is rearranged via a Mg-dependent methyl migration to produce 3-hydroxy-3-methyl-2-ketobutyrate (HMKB). In the reductase reaction, this 2-ketoacid undergoes a metal-dependent reduction by NADPH to yield (R)-2,3-dihydroxy-isovalerate. This is Ketol-acid reductoisomerase (NADP(+)) from Prochlorococcus marinus (strain NATL1A).